The following is a 395-amino-acid chain: Ribosomal RNA small subunit methyltransferase H (395 aa).

S-adenosyl-L-methionine contacts are provided by residues 101 to 103 (GGH), D120, Y147, D171, and Q178.

Belongs to the methyltransferase superfamily. RsmH family.

It localises to the cytoplasm. It carries out the reaction cytidine(1402) in 16S rRNA + S-adenosyl-L-methionine = N(4)-methylcytidine(1402) in 16S rRNA + S-adenosyl-L-homocysteine + H(+). In terms of biological role, specifically methylates the N4 position of cytidine in position 1402 (C1402) of 16S rRNA. The polypeptide is Ribosomal RNA small subunit methyltransferase H (Mycobacterium marinum (strain ATCC BAA-535 / M)).